We begin with the raw amino-acid sequence, 110 residues long: Suppressor of silencing 2b (110 aa).

The disordered stretch occupies residues 16–45 (ARMVEAKKQRRRSHKQNRRERGHKSPSERA). Residues 22–27 (KKQRRR) carry the Nuclear localization signal motif. A compositionally biased stretch (basic residues) spans 23-37 (KQRRRSHKQNRRERG).

It belongs to the cucumovirus/ilarvirus protein 2b family. Homotetramer. Interacts with host AGO1; this interaction blocks AGO1 cleavage activity to attenuate RNA silencing and thus counter host defense. Interacts with host JAZ.

The protein resides in the host nucleus. Functionally, multifunctional protein that plays two independent roles: viral suppressor of host RNAi (VSR) and viral inducer of host attractiveness to insect vectors (VIA). Acts as a suppressor of RNA-mediated gene silencing, also known as post-transcriptional gene silencing (PTGS), a mechanism of plant viral defense that limits the accumulation of viral RNAs. May directly interfere with mobile silencing signaling. Also inhibits signal transduction by the phytohormone jasmonate, making the infected plant more attractive to aphids, which are the second host to play a role as a dissemination vector. Acts by binding to and inhibiting JAZ degradation in the host. The chain is Suppressor of silencing 2b from Cucurbita pepo (Vegetable marrow).